Consider the following 276-residue polypeptide: Undecaprenyl-diphosphatase 2 (276 aa).

The next 8 membrane-spanning stretches (helical) occupy residues 4–24, 44–64, 87–107, 114–134, 150–170, 193–213, 225–245, and 256–276; these read IEAL…VSSL, DFLP…LIYF, ARLM…GLLL, LFAS…LLLW, LSFA…LPGF, FSFL…IPKL, LLLA…WFLM, and LRPF…FKLV.

It belongs to the UppP family.

Its subcellular location is the cell inner membrane. It catalyses the reaction di-trans,octa-cis-undecaprenyl diphosphate + H2O = di-trans,octa-cis-undecaprenyl phosphate + phosphate + H(+). Functionally, catalyzes the dephosphorylation of undecaprenyl diphosphate (UPP). Confers resistance to bacitracin. The protein is Undecaprenyl-diphosphatase 2 of Chromobacterium violaceum (strain ATCC 12472 / DSM 30191 / JCM 1249 / CCUG 213 / NBRC 12614 / NCIMB 9131 / NCTC 9757 / MK).